A 109-amino-acid chain; its full sequence is Phosphoribosyl-ATP pyrophosphatase (109 aa).

This sequence belongs to the PRA-PH family.

Its subcellular location is the cytoplasm. The catalysed reaction is 1-(5-phospho-beta-D-ribosyl)-ATP + H2O = 1-(5-phospho-beta-D-ribosyl)-5'-AMP + diphosphate + H(+). It participates in amino-acid biosynthesis; L-histidine biosynthesis; L-histidine from 5-phospho-alpha-D-ribose 1-diphosphate: step 2/9. The protein is Phosphoribosyl-ATP pyrophosphatase of Paramagnetospirillum magneticum (strain ATCC 700264 / AMB-1) (Magnetospirillum magneticum).